Consider the following 590-residue polypeptide: DEAD-box ATP-dependent RNA helicase 27 (590 aa).

Residues 1–92 form a disordered region; it reads MAPAPATTSS…EKGNEGGSGI (92 aa). Residues 27–62 show a composition bias toward acidic residues; the sequence is SDSESEELSYDTAAADEEEGEEEAPNQMEELEEEQE. Positions 40–87 form a coiled coil; that stretch reads AADEEEGEEEAPNQMEELEEEQEEEKKEKKQKKEMSKEKKRKKEKGNE. Residues 63-76 show a composition bias toward basic and acidic residues; it reads EEKKEKKQKKEMSK. The Q motif motif lies at 96 to 124; that stretch reads MLFSELGVSEPTARAIREMNYTYLTQIQA. A Helicase ATP-binding domain is found at 127-302; sequence IPHLLNGKDV…KLSFEKNEES (176 aa). 140–147 contacts ATP; sequence AKTGSGKT. The DEAD box signature appears at 250-253; that stretch reads DEAD. Residues 335–488 form the Helicase C-terminal domain; the sequence is RFLVLYAFLK…NKVPNLQSHL (154 aa). The interval 551 to 590 is disordered; the sequence is SASKHRRKMRKVDGGRRHGISAANPYGRKGGDDKRQFARF. Basic and acidic residues predominate over residues 579-590; it reads KGGDDKRQFARF.

The protein belongs to the DEAD box helicase family. DDX18/HAS1 subfamily.

The enzyme catalyses ATP + H2O = ADP + phosphate + H(+). The sequence is that of DEAD-box ATP-dependent RNA helicase 27 from Oryza sativa subsp. japonica (Rice).